Consider the following 146-residue polypeptide: Leghemoglobin 2 (146 aa).

In terms of domain architecture, Globin spans 2–146 (GFTAQQDALV…LAAAIKKAMS (145 aa)). Tyrosine 30 bears the Nitrated tyrosine mark. Serine 45 contacts heme b. Serine 45 is modified (phosphoserine). Position 61 (histidine 61) interacts with O2. Residues lysine 64, histidine 93, and lysine 96 each coordinate heme b. Tyrosine 134 bears the Nitrated tyrosine mark.

Belongs to the plant globin family. As to quaternary structure, monomer. Post-translationally, nitrated in effective nodules and particularly in hypoxic conditions; this mechanism may play a protective role in the symbiosis by buffering toxic peroxynitrite NO(2)(-). Nitration level decrease during nodule senescence. In terms of processing, phosphorylation at Ser-45 disrupts the molecular environment of its porphyrin ring oxygen binding pocket, thus leading to a reduced oxygen consumption and to the delivery of oxygen O(2) to symbiosomes. Specifically and strongly expressed in root nodules and at low levels in seedlings.

It is found in the cytoplasm. The protein localises to the cytosol. It localises to the nucleus. In terms of biological role, leghemoglobin that reversibly binds oxygen O(2) through a pentacoordinated heme iron. In root nodules, facilitates the diffusion of oxygen to the bacteroids while preventing the bacterial nitrogenase from being inactivated by buffering dioxygen, nitric oxide and carbon monoxide, and promoting the formation of reactive oxygen species (ROS, e.g. H(2)O(2)). This role is essential for symbiotic nitrogen fixation (SNF). In Lotus japonicus (Lotus corniculatus var. japonicus), this protein is Leghemoglobin 2.